The chain runs to 483 residues: WAS/WASL-interacting protein family member 3 (483 aa).

Residues 1–29 show a composition bias toward pro residues; the sequence is MPVPPPPPPPLPPPPPPLGAPPPPPPSAP. Residues 1-414 are disordered; sequence MPVPPPPPPP…GGQLRNGSLH (414 aa). 3 short sequence motifs (profilin-binding motif) span residues 3 to 8, 11 to 16, and 20 to 25; these read VPPPPP, LPPPPP, and APPPPP. In terms of domain architecture, WH2 spans 45–62; that stretch reads GRSALLADIQQGTRLRKV. Arginine 46 is modified (asymmetric dimethylarginine). Residues 58–61 carry the RLRK motif; the sequence is RLRK. Polar residues-rich tracts occupy residues 63 to 78 and 87 to 96; these read TQIN…SSKG and ANTRGASTPP. A Phosphoserine modification is found at serine 149. Residues 166-192 show a composition bias toward pro residues; that stretch reads PPRPNVPAPPPPTPPPPPPPLPPPLPS. Serine 202 bears the Phosphoserine mark. 2 stretches are compositionally biased toward pro residues: residues 215 to 239 and 256 to 271; these read VAPP…PLPP and HLPP…PPCG. Low complexity predominate over residues 277–288; that stretch reads AEPASPAQDAQE. Residues 289-298 show a composition bias toward pro residues; that stretch reads PPAPPPPLPP. Low complexity-rich tracts occupy residues 299 to 308 and 331 to 345; these read YASCSPRASL and PSFQ…AQAL. Position 383 is a phosphoserine (serine 383). Residues 393 to 404 show a composition bias toward low complexity; the sequence is QQATAWTPTQQP. The WASP-binding motif signature appears at 424-448; that stretch reads TFHSVEDFPPPDEYKPCQKIYPSKI. The segment at 461 to 483 is disordered; the sequence is EAVGQSSDDIKGRNSQLSLKTLR. The segment covering 473–483 has biased composition (polar residues); sequence RNSQLSLKTLR.

The protein belongs to the verprolin family. In terms of assembly, interacts with WASL, and monomeric and filamentous actin.

Its subcellular location is the cytoplasm. In terms of biological role, may be a regulator of cytoskeletal organization. May have a role in spermatogenesis. The sequence is that of WAS/WASL-interacting protein family member 3 (WIPF3) from Homo sapiens (Human).